We begin with the raw amino-acid sequence, 397 residues long: Neuroplastin (397 aa).

Positions 1-28 (MSGSSLPGALALSLLLVSGSLLPGPGAA) are cleaved as a signal peptide. Ig-like domains follow at residues 29–134 (QNAG…PSIT), 148–234 (PRIV…IEVK), and 237–327 (PDIT…ASVS). Over 29–338 (QNAGFVKSPM…VLRVRSHLAP (310 aa)) the chain is Extracellular. C52 and C116 form a disulfide bridge. The tract at residues 149–161 (RIVTSEEVIIRES) is narpin; mediates binding with FGFR1 and has antidepressant-like activity. A disulfide bond links C169 and C217. N-linked (GlcNAc...) asparagine glycans are attached at residues N170, N196, N228, N283, N295, and N316. C258 and C315 are oxidised to a cystine. Residues 339–359 (LWPFLGILAEIIILVVIIVVY) traverse the membrane as a helical segment. The Cytoplasmic segment spans residues 360-397 (EKRKRPDEVPDDDEPAGPMKTNSTNNHKDKNLRQRNTN). Residues 364 to 397 (RPDEVPDDDEPAGPMKTNSTNNHKDKNLRQRNTN) form a disordered region.

In terms of assembly, interacts with ATP2B1; this interaction stabilizes ATP2B1 and increases ATPase activity; this interaction controls T cell calcium homeostasis following T cell activation. Interacts with XKR8; promoting its localization at the cell membrane. N-glycosylated. In terms of tissue distribution, isoform 1 and isoform 2 are widely expressed with variable levels in brain. Isoform 1 is expressed in cerebellum and midbrain. Isoform 1 and isoform 2 are expressed in cerebral cortex, hippocampus and striatum. Isoform 2 is more abundant in the cerebral cortex than isoform 1.

The protein localises to the cell membrane. Its subcellular location is the postsynaptic density. Functionally, probable homophilic and heterophilic cell adhesion molecule involved in long term potentiation at hippocampal excitatory synapses through activation of p38MAPK. May also regulate neurite outgrowth by activating the FGFR1 signaling pathway. May play a role in synaptic plasticity. Also acts as a chaperone for ATP2B1; stabilizes ATP2B1 and increases its ATPase activity. Promotes localization of XKR8 at the cell membrane. The protein is Neuroplastin (Nptn) of Mus musculus (Mouse).